The sequence spans 871 residues: Dual O-methyltransferase/FAD-dependent monooxygenase CTB3 (871 aa).

Residues 1–429 (MMQFQRDLEA…GLLTVRSAGQ (429 aa)) form an O-methyltransferase region. D279 serves as a coordination point for S-adenosyl-L-methionine. Residue H331 is the Proton acceptor of the active site. Positions 430 to 871 (TALSGTNTLT…NLVDCSEFVF (442 aa)) are FAD-dependent monooxygenase. FAD is bound by residues E485, R569, and A806.

The protein in the C-terminal section; belongs to the paxM FAD-dependent monooxygenase family. In the N-terminal section; belongs to the class I-like SAM-binding methyltransferase superfamily. Cation-independent O-methyltransferase family. COMT subfamily.

It carries out the reaction nor-toralactone + S-adenosyl-L-methionine = toralactone + S-adenosyl-L-homocysteine + H(+). The catalysed reaction is toralactone + NADH + O2 + H(+) = 1-(3,4,5-trihydroxy-7-methoxynaphthalen-2-yl)propan-2-one + CO2 + NAD(+). The protein operates within mycotoxin biosynthesis. In terms of biological role, dual O-methyltransferase/FAD-dependent monooxygenase; part of the gene cluster that mediates the biosynthesis of cercosporin, a light-activated, non-host-selective toxin. The perylenequinone chromophore of cercosporin absorbs light energy to attain an electronically-activated triplet state and produces active oxygen species such as the hydroxyl radical, superoxide, hydrogen peroxide or singlet oxygen upon reaction with oxygen molecules. These reactive oxygen species cause damage to various cellular components including lipids, proteins and nucleic acids. The first step of cercosporin biosynthesis is performed by the polyketide synthase CTB1 which catalyzes the formation of nor-toralactone. The starter unit acyltransferase (SAT) domain of CTB1 initiates polyketide extension by the selective utilization of acetyl-CoA, which is elongated to the heptaketide in the beta-ketoacyl synthase (KS) domain by successive condensations with six malonyl units introduced by the malonyl acyltransferase (MAT) domain. The product template (PT) domain catalyzes C4-C9 and C2-C11 aldol cyclizations and dehydrations to a trihydroxynaphthalene, which is thought to be delivered to the thioesterase (TE) domain for product release. The bifunctional enzyme CTB3 then methylates nor-toralactone to toralactone before conducting an unusual oxidative aromatic ring opening. The O-methyltransferase CTB2 further methylates the nascent OH-6 of the CBT3 product, blocking further oxidation at this site before the reductase CTB6 reduces the 2-oxopropyl ketone at position C7, giving naphthalene. The FAD-dependent monooxygenase CTB5 in concert with the multicopper oxidase CTB12 are responsible for homodimerization of naphthalene with CTB7 installing the dioxepine moiety, finally producing cercosporin. The fasciclin domain-containing protein CTB11 might act with CTB5 and CTB12 whereas the roles of CTB9 and CTB10 have still to be elucidated. The polypeptide is Dual O-methyltransferase/FAD-dependent monooxygenase CTB3 (Cercospora nicotianae (Barn spot disease fungus)).